The chain runs to 143 residues: Large ribosomal subunit protein uL11 (143 aa).

It belongs to the universal ribosomal protein uL11 family. Part of the ribosomal stalk of the 50S ribosomal subunit. Interacts with L10 and the large rRNA to form the base of the stalk. L10 forms an elongated spine to which L12 dimers bind in a sequential fashion forming a multimeric L10(L12)X complex. In terms of processing, one or more lysine residues are methylated.

Its function is as follows. Forms part of the ribosomal stalk which helps the ribosome interact with GTP-bound translation factors. This is Large ribosomal subunit protein uL11 from Clavibacter michiganensis subsp. michiganensis (strain NCPPB 382).